We begin with the raw amino-acid sequence, 33 residues long: MSDIN-like toxin proprotein 6 (33 aa).

A propeptide spanning residues 1–10 (MSDINATRLP) is cleaved from the precursor. Residues 11-20 (LILLAALGIP) constitute a cross-link (cyclopeptide (Leu-Pro)). Positions 21–33 (SDDADSTLTRGER) are excised as a propeptide.

This sequence belongs to the MSDIN fungal toxin family. Processed by the macrocyclase-peptidase enzyme POPB to yield a toxic cyclic decapeptide. POPB first removes 10 residues from the N-terminus. Conformational trapping of the remaining peptide forces the enzyme to release this intermediate rather than proceed to macrocyclization. The enzyme rebinds the remaining peptide in a different conformation and catalyzes macrocyclization of the N-terminal 10 residues.

Functionally, probable toxin that belongs to the MSDIN-like toxin family responsible for a large number of food poisoning cases and deaths. This is MSDIN-like toxin proprotein 6 from Amanita phalloides (Death cap).